The sequence spans 332 residues: Ribosomal RNA small subunit methyltransferase C (332 aa).

This sequence belongs to the methyltransferase superfamily. RsmC family. As to quaternary structure, monomer.

Its subcellular location is the cytoplasm. It carries out the reaction guanosine(1207) in 16S rRNA + S-adenosyl-L-methionine = N(2)-methylguanosine(1207) in 16S rRNA + S-adenosyl-L-homocysteine + H(+). Specifically methylates the guanine in position 1207 of 16S rRNA in the 30S particle. The sequence is that of Ribosomal RNA small subunit methyltransferase C from Pseudomonas aeruginosa (strain LESB58).